The chain runs to 389 residues: Putative nickel insertion protein (389 aa).

Belongs to the LarC family.

The chain is Putative nickel insertion protein from Desulfotalea psychrophila (strain LSv54 / DSM 12343).